We begin with the raw amino-acid sequence, 442 residues long: C4-dicarboxylate transport protein (442 aa).

A run of 8 helical transmembrane segments spans residues 19-39, 55-75, 90-110, 161-181, 199-219, 232-252, 318-338, and 366-386; these read QLYFQVVVAIVAGVLLGHFEP, LVKMIIAPVIFLTIVTGIAGM, AYFLFFSTLALVVGMVVAHVV, ILQVLFVAVLFGISLAMVGDA, LVGILMKAAPLGAFGAIAFTI, WLVGSFYITSLLFVVVVLGFV, IYMTLAALFIAQATNTHLTLG, and AATLAVVPEVPVAGMALILGV.

Belongs to the dicarboxylate/amino acid:cation symporter (DAACS) (TC 2.A.23) family.

It is found in the cell inner membrane. Its function is as follows. Responsible for the transport of dicarboxylates such as succinate, fumarate, and malate from the periplasm across the membrane. This is C4-dicarboxylate transport protein from Delftia acidovorans (strain DSM 14801 / SPH-1).